We begin with the raw amino-acid sequence, 353 residues long: Photosystem II protein D1 (353 aa).

T2 carries the N-acetylthreonine modification. Residue T2 is modified to Phosphothreonine. Helical transmembrane passes span Y29–S46, H118–L133, and W142–A156. Residue H118 coordinates chlorophyll a. Y126 serves as a coordination point for pheophytin a. Positions 170 and 189 each coordinate [CaMn4O5] cluster. A helical membrane pass occupies residues F197–L218. Residue H198 participates in chlorophyll a binding. Residues H215 and S264–F265 contribute to the a quinone site. A Fe cation-binding site is contributed by H215. Fe cation is bound at residue H272. A helical transmembrane segment spans residues F274–L288. Residues H332, E333, D342, and A344 each coordinate [CaMn4O5] cluster. The propeptide occupies S345–A353.

Belongs to the reaction center PufL/M/PsbA/D family. PSII is composed of 1 copy each of membrane proteins PsbA, PsbB, PsbC, PsbD, PsbE, PsbF, PsbH, PsbI, PsbJ, PsbK, PsbL, PsbM, PsbT, PsbX, PsbY, PsbZ, Psb30/Ycf12, at least 3 peripheral proteins of the oxygen-evolving complex and a large number of cofactors. It forms dimeric complexes. The D1/D2 heterodimer binds P680, chlorophylls that are the primary electron donor of PSII, and subsequent electron acceptors. It shares a non-heme iron and each subunit binds pheophytin, quinone, additional chlorophylls, carotenoids and lipids. D1 provides most of the ligands for the Mn4-Ca-O5 cluster of the oxygen-evolving complex (OEC). There is also a Cl(-1) ion associated with D1 and D2, which is required for oxygen evolution. The PSII complex binds additional chlorophylls, carotenoids and specific lipids. is required as a cofactor. Tyr-161 forms a radical intermediate that is referred to as redox-active TyrZ, YZ or Y-Z. In terms of processing, C-terminally processed by CTPA; processing is essential to allow assembly of the oxygen-evolving complex and thus photosynthetic growth.

Its subcellular location is the plastid. It localises to the chloroplast thylakoid membrane. It carries out the reaction 2 a plastoquinone + 4 hnu + 2 H2O = 2 a plastoquinol + O2. Photosystem II (PSII) is a light-driven water:plastoquinone oxidoreductase that uses light energy to abstract electrons from H(2)O, generating O(2) and a proton gradient subsequently used for ATP formation. It consists of a core antenna complex that captures photons, and an electron transfer chain that converts photonic excitation into a charge separation. The D1/D2 (PsbA/PsbD) reaction center heterodimer binds P680, the primary electron donor of PSII as well as several subsequent electron acceptors. This chain is Photosystem II protein D1, found in Oltmannsiellopsis viridis (Marine flagellate).